The chain runs to 72 residues: uncharacterized protein (72 aa).

Residues 1–17 form the signal peptide; sequence MSLGLAIAVGIVLGVVA.

This is an uncharacterized protein from Schizosaccharomyces pombe (strain 972 / ATCC 24843) (Fission yeast).